The sequence spans 429 residues: Aspartate--tRNA(Asp/Asn) ligase (429 aa).

Glu167 contributes to the L-aspartate binding site. The aspartate stretch occupies residues 189–192 (QLYK). Arg210 provides a ligand contact to L-aspartate. Residues 210 to 212 (RAE) and Glu352 contribute to the ATP site. Positions 352 and 355 each coordinate Mg(2+). L-aspartate-binding residues include Ser355 and Arg359. 400–403 (GLAR) serves as a coordination point for ATP.

Belongs to the class-II aminoacyl-tRNA synthetase family. Type 2 subfamily. As to quaternary structure, homodimer. Mg(2+) is required as a cofactor.

The protein localises to the cytoplasm. The enzyme catalyses tRNA(Asx) + L-aspartate + ATP = L-aspartyl-tRNA(Asx) + AMP + diphosphate. Its function is as follows. Aspartyl-tRNA synthetase with relaxed tRNA specificity since it is able to aspartylate not only its cognate tRNA(Asp) but also tRNA(Asn). Reaction proceeds in two steps: L-aspartate is first activated by ATP to form Asp-AMP and then transferred to the acceptor end of tRNA(Asp/Asn). This chain is Aspartate--tRNA(Asp/Asn) ligase, found in Saccharolobus solfataricus (strain ATCC 35092 / DSM 1617 / JCM 11322 / P2) (Sulfolobus solfataricus).